Reading from the N-terminus, the 800-residue chain is Probable inorganic carbon transporter subunit DabA (800 aa).

Positions 329, 331, 488, and 503 each coordinate Zn(2+).

The protein belongs to the inorganic carbon transporter (TC 9.A.2) DabA family. As to quaternary structure, forms a complex with DabB. Zn(2+) is required as a cofactor.

The protein localises to the cell inner membrane. Part of an energy-coupled inorganic carbon pump. The polypeptide is Probable inorganic carbon transporter subunit DabA (Roseobacter denitrificans (strain ATCC 33942 / OCh 114) (Erythrobacter sp. (strain OCh 114))).